The sequence spans 75 residues: Protein SlyX homolog (75 aa).

Belongs to the SlyX family.

The chain is Protein SlyX homolog from Chromobacterium violaceum (strain ATCC 12472 / DSM 30191 / JCM 1249 / CCUG 213 / NBRC 12614 / NCIMB 9131 / NCTC 9757 / MK).